We begin with the raw amino-acid sequence, 163 residues long: Small ribosomal subunit protein eS10A (163 aa).

The interval 92 to 163 (LTQTTRSNAV…GFGRASRYDN (72 aa)) is disordered. Positions 105–116 (GGPGGPGGGFGG) are enriched in gly residues.

This sequence belongs to the eukaryotic ribosomal protein eS10 family.

The protein resides in the cytoplasm. The sequence is that of Small ribosomal subunit protein eS10A (RpS10a) from Drosophila melanogaster (Fruit fly).